Reading from the N-terminus, the 333-residue chain is Tetraacyldisaccharide 4'-kinase (333 aa).

55–62 (TAGGNGKT) is a binding site for ATP.

The protein belongs to the LpxK family.

It catalyses the reaction a lipid A disaccharide + ATP = a lipid IVA + ADP + H(+). It functions in the pathway glycolipid biosynthesis; lipid IV(A) biosynthesis; lipid IV(A) from (3R)-3-hydroxytetradecanoyl-[acyl-carrier-protein] and UDP-N-acetyl-alpha-D-glucosamine: step 6/6. Transfers the gamma-phosphate of ATP to the 4'-position of a tetraacyldisaccharide 1-phosphate intermediate (termed DS-1-P) to form tetraacyldisaccharide 1,4'-bis-phosphate (lipid IVA). The sequence is that of Tetraacyldisaccharide 4'-kinase from Pectobacterium atrosepticum (strain SCRI 1043 / ATCC BAA-672) (Erwinia carotovora subsp. atroseptica).